A 399-amino-acid chain; its full sequence is Developmentally-regulated G-protein 2 (399 aa).

Positions 63–288 (GRVALIGFPS…LLARMWDEMG (226 aa)) constitute an OBG-type G domain. GTP-binding positions include 69–76 (GFPSVGKS), 115–119 (DLPGI), and 246–249 (NKID). A TGS domain is found at 288–366 (GLVRVYSKPQ…EDEDVVQIVK (79 aa)). The segment at 372 to 399 (EGGRGRFKSHSNAPARIADREKKAPLKQ) is disordered. Residues 388-399 (IADREKKAPLKQ) are compositionally biased toward basic and acidic residues.

It belongs to the TRAFAC class OBG-HflX-like GTPase superfamily. OBG GTPase family.

The protein resides in the cytoplasm. Its function is as follows. Binds GDP and GTP, and has low GTPase activity. This is Developmentally-regulated G-protein 2 (DRG2) from Arabidopsis thaliana (Mouse-ear cress).